Here is a 255-residue protein sequence, read N- to C-terminus: Thiazole synthase (255 aa).

K96 (schiff-base intermediate with DXP) is an active-site residue. Residues G157, 183–184 (AG), and 205–206 (NT) contribute to the 1-deoxy-D-xylulose 5-phosphate site.

The protein belongs to the ThiG family. In terms of assembly, homotetramer. Forms heterodimers with either ThiH or ThiS.

It localises to the cytoplasm. It catalyses the reaction [ThiS sulfur-carrier protein]-C-terminal-Gly-aminoethanethioate + 2-iminoacetate + 1-deoxy-D-xylulose 5-phosphate = [ThiS sulfur-carrier protein]-C-terminal Gly-Gly + 2-[(2R,5Z)-2-carboxy-4-methylthiazol-5(2H)-ylidene]ethyl phosphate + 2 H2O + H(+). Its pathway is cofactor biosynthesis; thiamine diphosphate biosynthesis. Its function is as follows. Catalyzes the rearrangement of 1-deoxy-D-xylulose 5-phosphate (DXP) to produce the thiazole phosphate moiety of thiamine. Sulfur is provided by the thiocarboxylate moiety of the carrier protein ThiS. In vitro, sulfur can be provided by H(2)S. The chain is Thiazole synthase from Heliobacterium modesticaldum (strain ATCC 51547 / Ice1).